The primary structure comprises 247 residues: Uridylate kinase (247 aa).

17 to 20 (KFSG) provides a ligand contact to ATP. Gly-59 provides a ligand contact to UMP. ATP is bound by residues Gly-60 and Arg-64. Residues Asp-79 and 140–147 (TGNPFFTT) each bind UMP. ATP is bound by residues Thr-167, Tyr-173, and Asp-176.

This sequence belongs to the UMP kinase family. As to quaternary structure, homohexamer.

It is found in the cytoplasm. The enzyme catalyses UMP + ATP = UDP + ADP. It participates in pyrimidine metabolism; CTP biosynthesis via de novo pathway; UDP from UMP (UMPK route): step 1/1. With respect to regulation, inhibited by UTP. Catalyzes the reversible phosphorylation of UMP to UDP. This chain is Uridylate kinase, found in Legionella pneumophila (strain Lens).